A 73-amino-acid chain; its full sequence is Small ribosomal subunit protein eS27 (73 aa).

Cys-28, Cys-31, Cys-47, and Cys-50 together coordinate Zn(2+). A C4-type zinc finger spans residues 28–50 (CPKCGNRQVVFSHSTFRARCLNC).

Belongs to the eukaryotic ribosomal protein eS27 family. In terms of assembly, part of the 30S ribosomal subunit. Requires Zn(2+) as cofactor.

This is Small ribosomal subunit protein eS27 from Aeropyrum pernix (strain ATCC 700893 / DSM 11879 / JCM 9820 / NBRC 100138 / K1).